The sequence spans 256 residues: NAD-dependent protein deacylase 4 (256 aa).

Residues 1–250 (MRLPAEALKD…AKIHESLSTG (250 aa)) enclose the Deacetylase sirtuin-type domain. An NAD(+)-binding site is contributed by 19 to 39 (GAGISAESGILTYLDQMPKLW). Substrate contacts are provided by Y64 and R67. 98–101 (QNVD) is a binding site for NAD(+). H116 serves as the catalytic Proton acceptor. Zn(2+) contacts are provided by C124, C127, C152, and C155. Residues 192 to 194 (GTS), 218 to 220 (NTV), and A236 each bind NAD(+).

The protein belongs to the sirtuin family. Class III subfamily. It depends on Zn(2+) as a cofactor.

The protein localises to the cytoplasm. The enzyme catalyses N(6)-acetyl-L-lysyl-[protein] + NAD(+) + H2O = 2''-O-acetyl-ADP-D-ribose + nicotinamide + L-lysyl-[protein]. It carries out the reaction N(6)-succinyl-L-lysyl-[protein] + NAD(+) + H2O = 2''-O-succinyl-ADP-D-ribose + nicotinamide + L-lysyl-[protein]. Functionally, NAD-dependent lysine deacetylase and desuccinylase that specifically removes acetyl and succinyl groups on target proteins. Modulates the activities of several proteins which are inactive in their acylated form. This chain is NAD-dependent protein deacylase 4, found in Pseudomonas syringae pv. tomato (strain ATCC BAA-871 / DC3000).